Reading from the N-terminus, the 155-residue chain is MKLLIVAVGQRVPDWAQTAYEDYAKRFPPELKVELKAVKTEPRGSKTLETLYAAERERIEAAIPRGTRVVALDERGTSLTTKALAARLKDWQLGGDDVALVIGGPDGLDPAFRQAAHERIRLSDLTLPHAMVRVLLIEQLYRAWSVNAGHPYHRE.

Residues Leu-72, Gly-103, and 122-127 (LSDLTL) each bind S-adenosyl-L-methionine.

Belongs to the RNA methyltransferase RlmH family. In terms of assembly, homodimer.

It localises to the cytoplasm. It catalyses the reaction pseudouridine(1915) in 23S rRNA + S-adenosyl-L-methionine = N(3)-methylpseudouridine(1915) in 23S rRNA + S-adenosyl-L-homocysteine + H(+). Specifically methylates the pseudouridine at position 1915 (m3Psi1915) in 23S rRNA. The protein is Ribosomal RNA large subunit methyltransferase H of Paracidovorax citrulli (strain AAC00-1) (Acidovorax citrulli).